The chain runs to 603 residues: MRQSYRYASGAVVRRTLKGLRKLILCQDLRQDIRHLVRSYADMNISLPISAPPGWRLDFVEFEDIFGSAAVTDGPETPWGQLICCEESLESLGVLQFSTTVLPRVHGPRSSSEDEDSDDDDFFVYVEEIEPPSQARLVLLLGRYETVWCLDRDRGVLYYLAHSLDDFARHGLLHCEAIYGEQMRTPLLTTQPDHIICDLRLHDNSISELQRVTCRYRGECVPLRTPGEMTRPLLLCGQAENLKGVWPFICMETEQFNDLLKFFVDRLCCETMIMGVVGESLPSGVFHADFVILVDRACEFFYFDVSRREIWRLADSVDMLLTVGLLKIYQAGRRFHYAVDDAERLEVPGRCPHENFPFWDRFGTVERVRASTRHHELRYKWLIRKDRFIVRPDWCSMRNSLDEVSGTADVSWDPRIRPDYPQTSDLECAKQYWQELNDHVREQTARYGPVRRYSVWCGMSSRLERAVKRLQQRIPRQNLMNPSLMNQGLCVYYSDEEEDQEEDDTSDDDDQEKETENPQNNIGSLTRTPSSPGSLEGVEERMLNVMKEAVAEQDRKKTQKKHKIDTAQRRVLTRRAARAAVLEGRPTPKPTMPHPVSYLPFWM.

The span at 496-513 shows a compositional bias: acidic residues; that stretch reads EEEDQEEDDTSDDDDQEK. 2 disordered regions span residues 496–536 and 549–568; these read EEED…GSLE and AVAE…DTAQ. Positions 517–533 are enriched in polar residues; that stretch reads NPQNNIGSLTRTPSSPG.

The protein belongs to the herpesviridae US22 family.

This is an uncharacterized protein from Human cytomegalovirus (strain AD169) (HHV-5).